Reading from the N-terminus, the 120-residue chain is MKQLIIATLLSALSGGCMASSLRLPSAAELSGQWVLSGAEQHCDIRLNTDVLDGTTWKLAGDTACLQKLLPEAPVGWRPTPDGLTLTQADGSAVAFFSRNRDRYEHKLVDGSVRTLKKKA.

Positions 1 to 19 (MKQLIIATLLSALSGGCMA) are cleaved as a signal peptide. A disulfide bridge connects residues C43 and C65.

Belongs to the protease inhibitor I38 family. As to quaternary structure, monomer.

It localises to the periplasm. Its function is as follows. Inhibitor of the extracellular proteases A, B, and C of E.chrysanthemi and the S.marcescens 50 kDa extracellular protease. It forms a non-covalent bond with the proteases and may prevent autocatalytic cleavage of the proteases zymogen in the periplasm. This chain is Proteinase inhibitor (inh), found in Dickeya chrysanthemi (Pectobacterium chrysanthemi).